A 262-amino-acid chain; its full sequence is Flap endonuclease Xni (262 aa).

Mg(2+) is bound at residue aspartate 105. The region spanning 162 to 254 is the 5'-3' exonuclease domain; the sequence is ERSQFLDLMA…LKDFRVIDSL (93 aa). K(+)-binding residues include leucine 172, alanine 173, proline 181, isoleucine 183, and isoleucine 186. Residues 185 to 190 are interaction with DNA; the sequence is GIGPKS.

Belongs to the Xni family. Mg(2+) is required as a cofactor. It depends on K(+) as a cofactor.

In terms of biological role, has flap endonuclease activity. During DNA replication, flap endonucleases cleave the 5'-overhanging flap structure that is generated by displacement synthesis when DNA polymerase encounters the 5'-end of a downstream Okazaki fragment. The protein is Flap endonuclease Xni of Shewanella baltica (strain OS195).